The primary structure comprises 221 residues: MGRSSWRLVFAAGAGLALALEALPWLMRWLLAGRRPRREVLFFPSQVTCTEALLQAPGLPPGPSGCPCSLPHSESSLSRLLRALLAARSSLELCLFAFSSPQLGRAVQLLHQRGVRVRVITDCDYMALNGSQIGLLRKAGIQVRHDQDLGYMHHKFAIVDKKVLITGSLNWTTQAIQNNRENVLIMEDTEYVRLFLEEFERIWEEFDPTKYSFFPQKHRGH.

The Mitochondrial intermembrane segment spans residues methionine 1–serine 4. Positions methionine 1–arginine 38 are required for mitochondrial localization. Residues serine 5–methionine 27 form a helical membrane-spanning segment. Topologically, residues arginine 28–histidine 221 are cytoplasmic. The C3H1-type; atypical zinc-finger motif lies at proline 44 to serine 75. The PLD phosphodiesterase domain maps to aspartate 148–alanine 175. Catalysis depends on residues histidine 153, lysine 155, and aspartate 160.

This sequence belongs to the phospholipase D family. MitoPLD/Zucchini subfamily. In terms of assembly, homodimer. Interacts with MOV10L1. Interacts with MIGA1 and MIGA2; possibly facilitating homodimer formation. Interacts with GK2. As to expression, predominantly expressed in testis (at protein level) and in growing ovary. Also expressed in the brain, eye and urinary bladder (at protein level), but its levels were low or undetectable in other organs.

It is found in the mitochondrion outer membrane. The protein localises to the nucleus membrane. The protein resides in the cell membrane. It localises to the golgi apparatus. The enzyme catalyses a cardiolipin + H2O = a 1,2-diacyl-sn-glycero-3-phospho-(1'-sn-glycerol) + a 1,2-diacyl-sn-glycero-3-phosphate + H(+). With respect to regulation, single stranded DNA (ssDNA) hydrolase activity does not depend upon, but is stimulated by the presence of Ca(2+) and Mn(2+). MIGA1 and MIGA2 increase PLD6 self-association affinity and affects the homodimer conformation facilitating its phospholipase activity over the nuclease activity. MYC induces its expression and stimulates its phospholipase activity. Functionally, presents phospholipase and nuclease activities, depending on the different physiological conditions. Interaction with Mitoguardin (MIGA1 or MIGA2) affects the dimer conformation, facilitating the lipase activity over the nuclease activity. Plays a key role in mitochondrial fusion and fission via its phospholipase activity. In its phospholipase role, it uses the mitochondrial lipid cardiolipin as substrate to generate phosphatidate (PA or 1,2-diacyl-sn-glycero-3-phosphate), a second messenger signaling lipid. Production of PA facilitates Mitofusin-mediated fusion, whereas the cleavage of PA by the Lipin family of phosphatases produces diacylgycerol (DAG) which promotes mitochondrial fission. Both Lipin and DAG regulate mitochondrial dynamics and membrane fusion/fission, important processes for adapting mitochondrial metabolism to changes in cell physiology. Mitochondrial fusion enables cells to cope with the increased nucleotide demand during DNA synthesis. Mitochondrial function and dynamics are closely associated with biological processes such as cell growth, proliferation, and differentiation. Mediator of MYC activity, promotes mitochondrial fusion and activates AMPK which in turn inhibits YAP/TAZ, thereby inducing cell growth and proliferation. The endonuclease activity plays a critical role in PIWI-interacting RNA (piRNA) biogenesis during spermatogenesis. Implicated in spermatogenesis and sperm fertility in testicular germ cells, its single strand-specific nuclease activity is critical for the biogenesis/maturation of PIWI-interacting RNA (piRNA). MOV10L1 selectively binds to piRNA precursors and funnels them to the endonuclease that catalyzes the first cleavage step of piRNA processing to generate piRNA intermediate fragments that are subsequently loaded to Piwi proteins. Cleaves either DNA or RNA substrates with similar affinity, producing a 5' phosphate end, in this way it participates in the processing of primary piRNA transcripts. piRNAs provide essential protection against the activity of mobile genetic elements. piRNA-mediated transposon silencing is thus critical for maintaining genome stability, in particular in germline cells when transposons are mobilized as a consequence of wide-spread genomic demethylation. PA may act as signaling molecule in the recognition/transport of the precursor RNAs of primary piRNAs. Interacts with tesmin in testes, suggesting a role in spermatogenesis via association with its interacting partner. This is Mitochondrial cardiolipin hydrolase (Pld6) from Mus musculus (Mouse).